Reading from the N-terminus, the 30-residue chain is Hemocyanin subunit 2 (30 aa).

It belongs to the tyrosinase family. Hemocyanin subfamily. In terms of tissue distribution, hemolymph.

It localises to the secreted. The protein resides in the extracellular space. Its function is as follows. Hemocyanins are copper-containing oxygen carriers occurring freely dissolved in the hemolymph of many mollusks and arthropods. This chain is Hemocyanin subunit 2, found in Homarus americanus (American lobster).